The sequence spans 890 residues: Protein FAM171A1 (890 aa).

A signal peptide spans 1–21 (MSRSAALLLCLLGCHVWKAVT). At 22–303 (KTLREPGAGA…VTQDITTYHT (282 aa)) the chain is on the extracellular side. N190 and N194 each carry an N-linked (GlcNAc...) asparagine glycan. A helical membrane pass occupies residues 304 to 324 (VFLLAILGGMAFILLVLLCLL). At 325–890 (LYYCRRKCMK…ERPLMAFNIK (566 aa)) the chain is on the cytoplasmic side. Phosphoserine is present on residues S358, S360, S371, S422, S443, and S525. Disordered regions lie at residues 730-759 (AGRN…RGDA) and 818-890 (EGSS…FNIK). Residues 747 to 757 (NEPKSARKGRG) show a composition bias toward basic and acidic residues. Polar residues predominate over residues 822–833 (RRSGGQLPSLQE). S849 and S855 each carry phosphoserine. Over residues 858–869 (EEEEDDDDDDQG) the composition is skewed to acidic residues. Positions 870–883 (EDKKSPWQKREERP) are enriched in basic and acidic residues.

The protein belongs to the FAM171 family. Interacts with ADAM10, NSG1 and OAZ1.

The protein resides in the cell membrane. Functionally, involved in the regulation of the cytoskeletal dynamics, plays a role in actin stress fiber formation. The polypeptide is Protein FAM171A1 (FAM171A1) (Pongo abelii (Sumatran orangutan)).